Consider the following 199-residue polypeptide: MRVLGVDPGLTRCGIGVVDGGRGRTVTCVGVGVARTPADQELSARLLGVAEAVDEWLDTHRPEVVAIERVFSQHNVRTVMGTAQVSGIVALAAARRGLPVAFHTPSEVKAAISGSGRADKRQVTTMVTKILGLAEAPKPADAADALALAVCHLWRAPMAGRLAEAEAKAAALARNHKARLKDARQAAAQRAARTGGVQR.

Catalysis depends on residues Asp7, Glu68, and Asp141. Positions 7, 68, and 141 each coordinate Mg(2+).

This sequence belongs to the RuvC family. Homodimer which binds Holliday junction (HJ) DNA. The HJ becomes 2-fold symmetrical on binding to RuvC with unstacked arms; it has a different conformation from HJ DNA in complex with RuvA. In the full resolvosome a probable DNA-RuvA(4)-RuvB(12)-RuvC(2) complex forms which resolves the HJ. The cofactor is Mg(2+).

The protein localises to the cytoplasm. The enzyme catalyses Endonucleolytic cleavage at a junction such as a reciprocal single-stranded crossover between two homologous DNA duplexes (Holliday junction).. The RuvA-RuvB-RuvC complex processes Holliday junction (HJ) DNA during genetic recombination and DNA repair. Endonuclease that resolves HJ intermediates. Cleaves cruciform DNA by making single-stranded nicks across the HJ at symmetrical positions within the homologous arms, yielding a 5'-phosphate and a 3'-hydroxyl group; requires a central core of homology in the junction. The consensus cleavage sequence is 5'-(A/T)TT(C/G)-3'. Cleavage occurs on the 3'-side of the TT dinucleotide at the point of strand exchange. HJ branch migration catalyzed by RuvA-RuvB allows RuvC to scan DNA until it finds its consensus sequence, where it cleaves and resolves the cruciform DNA. The sequence is that of Crossover junction endodeoxyribonuclease RuvC from Saccharopolyspora erythraea (strain ATCC 11635 / DSM 40517 / JCM 4748 / NBRC 13426 / NCIMB 8594 / NRRL 2338).